The sequence spans 230 residues: Orotidine 5'-phosphate decarboxylase (230 aa).

Residues D11, K34, 61-70 (DLKLHDIPNT), T117, R179, Q188, G208, and R209 each bind substrate. Catalysis depends on K63, which acts as the Proton donor.

The protein belongs to the OMP decarboxylase family. Type 1 subfamily. As to quaternary structure, homodimer.

The catalysed reaction is orotidine 5'-phosphate + H(+) = UMP + CO2. Its pathway is pyrimidine metabolism; UMP biosynthesis via de novo pathway; UMP from orotate: step 2/2. Catalyzes the decarboxylation of orotidine 5'-monophosphate (OMP) to uridine 5'-monophosphate (UMP). This is Orotidine 5'-phosphate decarboxylase from Streptococcus gordonii (strain Challis / ATCC 35105 / BCRC 15272 / CH1 / DL1 / V288).